The primary structure comprises 262 residues: MTSAIKPKAGTRPSKARIRQSFERAAPTYDDAAAIQRRICIRLAEGLPDIAPTHLLDAGCGTGYAQANLQTRFPDAHRVALDLSPGMLQRVATPCCRVAGDLEHLPLADSSLDLYWSSLAVQWCDLAVALREAHRTLRPGGVIALASLGPATFHELRHAFADVDDHRHTLAFHSPGEIRQLASLAGLAAIDIKKSTEIAHYPDFKTLLRAVKAIGANQLGDGRRTSLMSRSSFQLAESACEQLRTPAGLPLTYDVIYLYARK.

It belongs to the methyltransferase superfamily.

It carries out the reaction malonyl-[ACP] + S-adenosyl-L-methionine = malonyl-[ACP] methyl ester + S-adenosyl-L-homocysteine. It functions in the pathway cofactor biosynthesis; biotin biosynthesis. In terms of biological role, converts the free carboxyl group of a malonyl-thioester to its methyl ester by transfer of a methyl group from S-adenosyl-L-methionine (SAM). It allows to synthesize pimeloyl-ACP via the fatty acid synthetic pathway. The sequence is that of Malonyl-[acyl-carrier protein] O-methyltransferase from Dechloromonas aromatica (strain RCB).